The primary structure comprises 317 residues: Protein-L-isoaspartate O-methyltransferase (317 aa).

The active site involves Ser-59.

The protein belongs to the methyltransferase superfamily. L-isoaspartyl/D-aspartyl protein methyltransferase family. As to quaternary structure, monomer.

It is found in the cytoplasm. It catalyses the reaction [protein]-L-isoaspartate + S-adenosyl-L-methionine = [protein]-L-isoaspartate alpha-methyl ester + S-adenosyl-L-homocysteine. In terms of biological role, catalyzes the methyl esterification of L-isoaspartyl residues in peptides and proteins that result from spontaneous decomposition of normal L-aspartyl and L-asparaginyl residues. It plays a role in the repair and/or degradation of damaged proteins. The chain is Protein-L-isoaspartate O-methyltransferase (pcm) from Thermotoga maritima (strain ATCC 43589 / DSM 3109 / JCM 10099 / NBRC 100826 / MSB8).